A 921-amino-acid polypeptide reads, in one-letter code: Probable TonB-dependent receptor NMB1497 (921 aa).

The first 25 residues, 1 to 25, serve as a signal peptide directing secretion; it reads MRSSFRLKPICFYLMGVTLYHYSYA. One can recognise a TBDR plug domain in the interval 53–174; it reads DKKVFTDARA…LAGSANLRTL (122 aa). Residues 185–921 form the TBDR beta-barrel domain; the sequence is TYGLLLKGLT…TFLMTMSYKF (737 aa). The TonB C-terminal box motif lies at 904–921; that stretch reads LTNFARGRTFLMTMSYKF.

It belongs to the TonB-dependent receptor family.

Its subcellular location is the cell outer membrane. Its function is as follows. Probable receptor, TonB-dependent. The sequence is that of Probable TonB-dependent receptor NMB1497 from Neisseria meningitidis serogroup B (strain ATCC BAA-335 / MC58).